The chain runs to 1050 residues: TSC22 domain family protein 1 (1050 aa).

The required for interaction with TGFBR1 and promotion of TGF-beta signaling stretch occupies residues 1-99 (MHQPPESTAA…SQAQLQGQPL (99 aa)). 8 disordered regions span residues 22–111 (MAHP…KKSG), 126–285 (ISSN…VSSA), 445–479 (QTPT…SVGS), 511–531 (DFSS…VQLQ), 581–609 (LAQP…QLQY), 720–740 (VQPP…PPSS), 795–847 (QLPT…GSLV), and 879–919 (SLAQ…VSDG). Low complexity predominate over residues 38–55 (ASALSAAGTGVSGAAPSS). Over residues 58-71 (FPPPSSLLQPPPPA) the composition is skewed to pro residues. Low complexity predominate over residues 85-97 (SLNLLSQAQLQGQ). Residues 134-143 (EDTESYDDLD) show a composition bias toward acidic residues. A compositionally biased stretch (basic residues) spans 217–241 (HPHHLHHHHHIHHGHHLHHGHHHSS). Phosphoserine is present on Ser265. Residues 458–476 (TSGSSVSSSVSTLSHYTES) show a composition bias toward low complexity. Over residues 586–603 (LPYPQPAPPVQTPLPGAP) the composition is skewed to pro residues. A compositionally biased stretch (low complexity) spans 906–919 (LSGDSGGVSAVSDG). The leucine-zipper stretch occupies residues 983–1004 (LKEQIKELIEKNSQLEQENNLL). Positions 1015 to 1050 (QFQAQLQTGSPPATTQPQGTTQPPAQPASQGSGSTA) are disordered. The span at 1021-1050 (QTGSPPATTQPQGTTQPPAQPASQGSGSTA) shows a compositional bias: low complexity.

It belongs to the TSC-22/Dip/Bun family. As to quaternary structure, forms homodimers. Forms heterodimers. Component of a complex composed of TSC22D1 (via N-terminus), TGFBR1 and TGFBR2; the interaction between TSC22D1 and TGFBR1 is inhibited by SMAD7 and promoted by TGFB1. Interacts with SMAD7; the interaction requires TGF-beta and the interaction is inhibited by TGFBR1. Interacts with TPT1/fortilin; interaction results in the destabilization of TSC22D1 protein and prevents TSC22D1-mediated apoptosis. Interacts with SMAD4 (via N-terminus). Interacts with ACVRL1/ALK1, ACVR1/ALK2, BMPR1A/ALK3, ACVR1B/ALK4, BMPR1B/ALK6, ACVR2A/ACTRII, and BMPR2. Interacts with SMAD6. Interacts with TFE3; the interaction is enhanced in the presence of TGF-beta. In terms of assembly, forms a heterodimer with TSC22D4/THG1. Forms a heterodimer with TSC22D4/THG1. Interacts with histone H1-2. Interacts with GNL3. As to expression, ubiquitously expressed, abundantly expressed in testis, ovary, uterus, and lung. Expressed in cardiomyocytes.

It is found in the cytoplasm. It localises to the nucleus. The protein resides in the cell membrane. The protein localises to the mitochondrion. Functionally, transcriptional repressor. Acts on the C-type natriuretic peptide (CNP) promoter. Acts to promote CASP3-mediated apoptosis. Positively regulates TGF-beta signaling by interacting with SMAD7 which inhibits binding of SMAD7 to TGFBR1, preventing recruitment of SMURF ubiquitin ligases to TGFBR1 and inhibiting SMURF-mediated ubiquitination and degradation of TGFBR1. Contributes to enhancement of TGF-beta signaling by binding to and modulating the transcription activator activity of SMAD4. Promotes TGF-beta-induced transcription of COL1A2; via its interaction with TFE3 at E-boxes in the gene proximal promoter. Plays a role in the repression of hematopoietic precursor cell growth. Promotes IL2 deprivation-induced apoptosis in T-lymphocytes, via repression of TSC22D3/GILZ transcription and activation of the caspase cascade. Its function is as follows. May act to negatively regulate TGFB3 signaling and thereby inhibit cell death in mammary gland cells. Positively regulates cell death in response to TGFB3 during mammary gland involution. This Rattus norvegicus (Rat) protein is TSC22 domain family protein 1.